Consider the following 450-residue polypeptide: Homogentisate 1,2-dioxygenase (450 aa).

Residue His-304 is the Proton acceptor of the active site. Fe cation-binding residues include His-347 and Glu-353. 2 residues coordinate homogentisate: Tyr-362 and His-383. His-383 is a Fe cation binding site.

Belongs to the homogentisate dioxygenase family. Hexamer; dimer of trimers. It depends on Fe cation as a cofactor.

The enzyme catalyses homogentisate + O2 = 4-maleylacetoacetate + H(+). It participates in amino-acid degradation; L-phenylalanine degradation; acetoacetate and fumarate from L-phenylalanine: step 4/6. Functionally, involved in the catabolism of homogentisate (2,5-dihydroxyphenylacetate or 2,5-OH-PhAc), a central intermediate in the degradation of phenylalanine and tyrosine. Catalyzes the oxidative ring cleavage of the aromatic ring of homogentisate to yield maleylacetoacetate. This is Homogentisate 1,2-dioxygenase from Burkholderia mallei (strain NCTC 10229).